We begin with the raw amino-acid sequence, 175 residues long: Large ribosomal subunit protein uL10 (175 aa).

This sequence belongs to the universal ribosomal protein uL10 family. As to quaternary structure, part of the ribosomal stalk of the 50S ribosomal subunit. The N-terminus interacts with L11 and the large rRNA to form the base of the stalk. The C-terminus forms an elongated spine to which L12 dimers bind in a sequential fashion forming a multimeric L10(L12)X complex.

Forms part of the ribosomal stalk, playing a central role in the interaction of the ribosome with GTP-bound translation factors. This chain is Large ribosomal subunit protein uL10, found in Picosynechococcus sp. (strain ATCC 27264 / PCC 7002 / PR-6) (Agmenellum quadruplicatum).